Reading from the N-terminus, the 227-residue chain is MELVFIRHGFSEWNAKNLFTGWRDVNLTERGVEEAKAAGKKLLDKGYEFDIAFTSVLTRAIKTCNIVLEESHQLWIPQVKNWRLNERHYGALQGLDKKATAEQYGDEQVHIWRRSYDISPPDLDPQDPNSAHNDRRYANIPSDVVPNAENLKLTLERALPFWEDQIAPAMLSGKRVLVVAHGNSLRALAKHIIGISDAEIMDFEIPTGQPLVLKLDDKLNYVEHYYL.

Residues Arg7 to Asn14, Thr20 to Gly21, Arg59, Glu86 to Tyr89, Lys97, Arg113 to Arg114, and Gly182 to Asn183 each bind substrate. His8 acts as the Tele-phosphohistidine intermediate in catalysis. Residue Glu86 is the Proton donor/acceptor of the active site.

This sequence belongs to the phosphoglycerate mutase family. BPG-dependent PGAM subfamily. In terms of assembly, homodimer.

It catalyses the reaction (2R)-2-phosphoglycerate = (2R)-3-phosphoglycerate. The protein operates within carbohydrate degradation; glycolysis; pyruvate from D-glyceraldehyde 3-phosphate: step 3/5. Functionally, catalyzes the interconversion of 2-phosphoglycerate and 3-phosphoglycerate. The chain is 2,3-bisphosphoglycerate-dependent phosphoglycerate mutase from Haemophilus influenzae (strain 86-028NP).